We begin with the raw amino-acid sequence, 244 residues long: Proteasome subunit alpha 2 (244 aa).

Belongs to the peptidase T1A family. As to quaternary structure, the 20S proteasome core is composed of 14 alpha and 14 beta subunits that assemble into four stacked heptameric rings, resulting in a barrel-shaped structure. The two inner rings, each composed of seven catalytic beta subunits, are sandwiched by two outer rings, each composed of seven alpha subunits. The catalytic chamber with the active sites is on the inside of the barrel. Has a gated structure, the ends of the cylinder being occluded by the N-termini of the alpha-subunits. Is capped at one or both ends by the proteasome regulatory ATPase, PAN.

The protein resides in the cytoplasm. Its activity is regulated as follows. The formation of the proteasomal ATPase PAN-20S proteasome complex, via the docking of the C-termini of PAN into the intersubunit pockets in the alpha-rings, triggers opening of the gate for substrate entry. Interconversion between the open-gate and close-gate conformations leads to a dynamic regulation of the 20S proteasome proteolysis activity. Functionally, component of the proteasome core, a large protease complex with broad specificity involved in protein degradation. The protein is Proteasome subunit alpha 2 of Haloarcula marismortui (strain ATCC 43049 / DSM 3752 / JCM 8966 / VKM B-1809) (Halobacterium marismortui).